Consider the following 391-residue polypeptide: Polyketide synthase 5 (391 aa).

Residue cysteine 164 is part of the active site.

The protein belongs to the thiolase-like superfamily. Chalcone/stilbene synthases family. Homodimer. In terms of tissue distribution, expressed in fruits.

It carries out the reaction (E)-4-coumaroyl-CoA + 3 malonyl-CoA + 3 H(+) = 2',4,4',6'-tetrahydroxychalcone + 3 CO2 + 4 CoA. Its pathway is secondary metabolite biosynthesis; flavonoid biosynthesis. Polyketide synthase producing naringenin chalcone. Can use p-coumaryl-CoA as substrate. This chain is Polyketide synthase 5 (PKS5), found in Rubus idaeus (Raspberry).